A 171-amino-acid chain; its full sequence is Pro-corazonin (171 aa).

An N-terminal signal peptide occupies residues 1-20 (MLHTRTIALLLVGLVVLVNA). At glutamine 21 the chain carries Pyrrolidone carboxylic acid. Asparagine 31 carries the asparagine amide modification. Residues 82-171 (FLRNPCDLRV…GFSDHRQKIA (90 aa)) constitute a propeptide that is removed on maturation.

Belongs to the corazonin family.

Its subcellular location is the secreted. Its function is as follows. Cardioactive peptide. Corazonin is probably involved in the physiological regulation of the heart beat. This Anopheles gambiae (African malaria mosquito) protein is Pro-corazonin.